The following is a 473-amino-acid chain: Siroheme synthase (473 aa).

Residues 1–222 (MNTQPHHSSP…GDESRADARL (222 aa)) form a precorrin-2 dehydrogenase /sirohydrochlorin ferrochelatase region. Residues 37–38 (EI) and 58–59 (EK) each bind NAD(+). Residues 233-473 (GEVWLVGAGP…QVVRHRVVSP (241 aa)) form a uroporphyrinogen-III C-methyltransferase region. Pro-242 contributes to the S-adenosyl-L-methionine binding site. Asp-265 acts as the Proton acceptor in catalysis. Lys-287 (proton donor) is an active-site residue. Residues 318-320 (GGD), Ile-323, 348-349 (SA), Met-401, and Gly-430 each bind S-adenosyl-L-methionine.

It in the N-terminal section; belongs to the precorrin-2 dehydrogenase / sirohydrochlorin ferrochelatase family. In the C-terminal section; belongs to the precorrin methyltransferase family.

It catalyses the reaction uroporphyrinogen III + 2 S-adenosyl-L-methionine = precorrin-2 + 2 S-adenosyl-L-homocysteine + H(+). It carries out the reaction precorrin-2 + NAD(+) = sirohydrochlorin + NADH + 2 H(+). The catalysed reaction is siroheme + 2 H(+) = sirohydrochlorin + Fe(2+). Its pathway is cofactor biosynthesis; adenosylcobalamin biosynthesis; precorrin-2 from uroporphyrinogen III: step 1/1. It participates in cofactor biosynthesis; adenosylcobalamin biosynthesis; sirohydrochlorin from precorrin-2: step 1/1. It functions in the pathway porphyrin-containing compound metabolism; siroheme biosynthesis; precorrin-2 from uroporphyrinogen III: step 1/1. The protein operates within porphyrin-containing compound metabolism; siroheme biosynthesis; siroheme from sirohydrochlorin: step 1/1. Its pathway is porphyrin-containing compound metabolism; siroheme biosynthesis; sirohydrochlorin from precorrin-2: step 1/1. In terms of biological role, multifunctional enzyme that catalyzes the SAM-dependent methylations of uroporphyrinogen III at position C-2 and C-7 to form precorrin-2 via precorrin-1. Then it catalyzes the NAD-dependent ring dehydrogenation of precorrin-2 to yield sirohydrochlorin. Finally, it catalyzes the ferrochelation of sirohydrochlorin to yield siroheme. The protein is Siroheme synthase of Gluconobacter oxydans (strain 621H) (Gluconobacter suboxydans).